The primary structure comprises 214 residues: ATP phosphoribosyltransferase (214 aa).

The protein belongs to the ATP phosphoribosyltransferase family. Short subfamily. As to quaternary structure, heteromultimer composed of HisG and HisZ subunits.

It is found in the cytoplasm. The enzyme catalyses 1-(5-phospho-beta-D-ribosyl)-ATP + diphosphate = 5-phospho-alpha-D-ribose 1-diphosphate + ATP. The protein operates within amino-acid biosynthesis; L-histidine biosynthesis; L-histidine from 5-phospho-alpha-D-ribose 1-diphosphate: step 1/9. Catalyzes the condensation of ATP and 5-phosphoribose 1-diphosphate to form N'-(5'-phosphoribosyl)-ATP (PR-ATP). Has a crucial role in the pathway because the rate of histidine biosynthesis seems to be controlled primarily by regulation of HisG enzymatic activity. This chain is ATP phosphoribosyltransferase, found in Alcanivorax borkumensis (strain ATCC 700651 / DSM 11573 / NCIMB 13689 / SK2).